A 252-amino-acid polypeptide reads, in one-letter code: Hydroxyacylglutathione hydrolase (252 aa).

Residues His54, His56, Asp58, His59, His113, Asp132, and His170 each contribute to the Zn(2+) site.

It belongs to the metallo-beta-lactamase superfamily. Glyoxalase II family. In terms of assembly, monomer. The cofactor is Zn(2+).

The catalysed reaction is an S-(2-hydroxyacyl)glutathione + H2O = a 2-hydroxy carboxylate + glutathione + H(+). Its pathway is secondary metabolite metabolism; methylglyoxal degradation; (R)-lactate from methylglyoxal: step 2/2. In terms of biological role, thiolesterase that catalyzes the hydrolysis of S-D-lactoyl-glutathione to form glutathione and D-lactic acid. This Synechococcus sp. (strain JA-2-3B'a(2-13)) (Cyanobacteria bacterium Yellowstone B-Prime) protein is Hydroxyacylglutathione hydrolase.